The primary structure comprises 304 residues: tRNA-uridine aminocarboxypropyltransferase 1 (304 aa).

Disordered regions lie at residues 1–29 (MALS…QTTS) and 165–193 (RNKA…HEST). The span at 180 to 193 (RTTDEEGWDLHEST) shows a compositional bias: basic and acidic residues. Residues 206–209 (DSTW) carry the DXTW motif.

This sequence belongs to the TDD superfamily. DTWD1 family.

The protein localises to the nucleus. It carries out the reaction a uridine in tRNA + S-adenosyl-L-methionine = a 3-[(3S)-3-amino-3-carboxypropyl]uridine in tRNA + S-methyl-5'-thioadenosine + H(+). Functionally, catalyzes the formation of 3-(3-amino-3-carboxypropyl)uridine (acp3U) at position 20 in the D-loop of several cytoplasmic tRNAs (acp3U(20)). This Mus musculus (Mouse) protein is tRNA-uridine aminocarboxypropyltransferase 1.